A 39-amino-acid chain; its full sequence is Larval cuticle protein SC6 (39 aa).

In terms of domain architecture, Chitin-binding type R&amp;R spans Val-15 to Asp-39.

Functionally, component of the cuticle of the larva of flesh fly. The sequence is that of Larval cuticle protein SC6 from Sarcophaga bullata (Grey flesh fly).